The primary structure comprises 186 residues: MSTATSKFLSYVLRHAPESIGLVLDSQGWADVADLLAKANASGTPLDEAGLRAVVAESDKKRFTLSEDGRRIRAAQGHSVKVDLGQPPVEPPPQLFHGTATRFLEPILREGLRPGERQQVHLSADRTTALAVGQRHGKPVVLIVDAGQMFADGCRFYLADNGVWLTDAVPFSYLTVSADSSAENDR.

The protein belongs to the KptA/TPT1 family.

In terms of biological role, removes the 2'-phosphate from RNA via an intermediate in which the phosphate is ADP-ribosylated by NAD followed by a presumed transesterification to release the RNA and generate ADP-ribose 1''-2''-cyclic phosphate (APPR&gt;P). May function as an ADP-ribosylase. The protein is Probable RNA 2'-phosphotransferase of Agrobacterium fabrum (strain C58 / ATCC 33970) (Agrobacterium tumefaciens (strain C58)).